The primary structure comprises 118 residues: NADH-quinone oxidoreductase subunit A (118 aa).

A run of 3 helical transmembrane segments spans residues 5 to 25 (YLGISLFLAAGLIIPFLAFAV), 61 to 81 (FLYALVFVAFDVETVFLYPWA), and 90 to 110 (FAIVEMFIFITILVVGFWYAW).

It belongs to the complex I subunit 3 family. As to quaternary structure, NDH-1 is composed of 14 different subunits. Subunits NuoA, H, J, K, L, M, N constitute the membrane sector of the complex.

The protein resides in the cell membrane. It catalyses the reaction a quinone + NADH + 5 H(+)(in) = a quinol + NAD(+) + 4 H(+)(out). Functionally, NDH-1 shuttles electrons from NADH, via FMN and iron-sulfur (Fe-S) centers, to quinones in the respiratory chain. The immediate electron acceptor for the enzyme in this species is believed to be a menaquinone. Couples the redox reaction to proton translocation (for every two electrons transferred, four hydrogen ions are translocated across the cytoplasmic membrane), and thus conserves the redox energy in a proton gradient. This Heliobacterium modesticaldum (strain ATCC 51547 / Ice1) protein is NADH-quinone oxidoreductase subunit A.